The sequence spans 242 residues: MEWSGEASVMALQRHGESAVILTVLSRETGLIRGLVPGGASAKRAAMLQPGNRVSLRWRARLEEQLGTFAVEPARARPGLLGSGDALAGVNAVTALLTFALPERDPHPRLADATEALLDLMDAGEGWAEAYLHWEMRLLDELGFGLDLTSCAVTGAREGLAYVSPRSGRAVSAQAAGEWAPRLLPLPAMLGGRGNGGIEDALALTGHFLQVRLAEAHAGKPLPPARARLVARLTASRHASGW.

This sequence belongs to the RecO family.

In terms of biological role, involved in DNA repair and RecF pathway recombination. The chain is DNA repair protein RecO from Paracoccus denitrificans (strain Pd 1222).